Reading from the N-terminus, the 738-residue chain is Ethylene receptor (738 aa).

A run of 3 helical transmembrane segments spans residues 22-42 (ISDF…VYFV), 53-73 (VLVQ…INLW), and 91-111 (VLTA…IPDL). The Cu cation site is built by Cys64 and His68. Residues 157–305 (DRHTILKTTL…VVADQVAVAL (149 aa)) enclose the GAF domain. The Histidine kinase domain maps to 348–585 (VMNHEMRTPM…TAIFIVKLGI (238 aa)). The residue at position 351 (His351) is a Phosphohistidine; by autocatalysis. Positions 613 to 730 (KVLIMDDNGF…KMRSVLSELL (118 aa)) constitute a Response regulatory domain. Asp661 is modified (4-aspartylphosphate).

It belongs to the ethylene receptor family. Homodimer; disulfide-linked. Cu cation serves as cofactor. Activation probably requires a transfer of a phosphate group between a His in the transmitter domain and an Asp of the receiver domain.

It is found in the endoplasmic reticulum membrane. It catalyses the reaction ATP + protein L-histidine = ADP + protein N-phospho-L-histidine.. Functionally, may act early in the ethylene signal transduction pathway, possibly as an ethylene receptor, or as a regulator of the pathway. This Nicotiana tabacum (Common tobacco) protein is Ethylene receptor (ETR1).